We begin with the raw amino-acid sequence, 377 residues long: MAKRPLGLNKANKSKKKKLDSAEKAEKAVAKEISPENDESAEPAPALTLDADEEDDMGQLESLYKNWTSSERDSPRILHGVVHECDSLLQKAKGEGLPARFHEIYAASLLDLAEFADKKKPVKKKKVKSDDVAPETSDMFVDAALERVETGLEQYPEDAGLLFVKSRALKQDIDEKMSAVSKEERKETAKKMISQLNKILEVFKLAQKHASTVTPAQLDVVEELIELSGALESVVKQSDISETTLVACEKFYNEILASEKDENTVKKAHRGVGTCKMIVADSLLDLLDDDDEDNDDTVELAKKNLKAAIEHFQKSETDEDGEFMVTLAETMIQYGNLFETESDDQKKWYGEAVKRLRQAQRLGVGKYDEMILELEDD.

Residues 1–72 (MAKRPLGLNK…LYKNWTSSER (72 aa)) form a disordered region. The segment covering 19 to 34 (LDSAEKAEKAVAKEIS) has biased composition (basic and acidic residues).

This sequence belongs to the ETT1 family.

It is found in the nucleus. Functionally, required for correct translation termination and probably involved in regulation of hypoxic gene expression. The chain is Enhancer of translation termination 1 (ETT1) from Yarrowia lipolytica (strain CLIB 122 / E 150) (Yeast).